The sequence spans 166 residues: Sec-independent protein translocase protein TatB (166 aa).

A helical transmembrane segment spans residues 2–22 (FDGIGFMELLLIGVLGLVVLG). The tract at residues 69–166 (SKGLSNLSPE…DTRSNPKANG (98 aa)) is disordered. Polar residues-rich tracts occupy residues 88–97 (QAAQSVNRPY) and 112–132 (QIYS…SQAN). Residues 133-153 (PTATVEASPAPASPATPSEPS) are compositionally biased toward low complexity. Residues 155–166 (GADTRSNPKANG) show a composition bias toward polar residues.

Belongs to the TatB family. The Tat system comprises two distinct complexes: a TatABC complex, containing multiple copies of TatA, TatB and TatC subunits, and a separate TatA complex, containing only TatA subunits. Substrates initially bind to the TatABC complex, which probably triggers association of the separate TatA complex to form the active translocon.

It is found in the cell inner membrane. Part of the twin-arginine translocation (Tat) system that transports large folded proteins containing a characteristic twin-arginine motif in their signal peptide across membranes. Together with TatC, TatB is part of a receptor directly interacting with Tat signal peptides. TatB may form an oligomeric binding site that transiently accommodates folded Tat precursor proteins before their translocation. This is Sec-independent protein translocase protein TatB from Shewanella baltica (strain OS155 / ATCC BAA-1091).